An 879-amino-acid polypeptide reads, in one-letter code: Phosphoenolpyruvate carboxylase (879 aa).

Residues H138 and K546 contribute to the active site.

This sequence belongs to the PEPCase type 1 family. Mg(2+) is required as a cofactor.

It carries out the reaction oxaloacetate + phosphate = phosphoenolpyruvate + hydrogencarbonate. Its function is as follows. Forms oxaloacetate, a four-carbon dicarboxylic acid source for the tricarboxylic acid cycle. The polypeptide is Phosphoenolpyruvate carboxylase (Pectobacterium carotovorum subsp. carotovorum (strain PC1)).